The following is an 87-amino-acid chain: Acyl-CoA-binding protein (87 aa).

N-acetylserine is present on Ser2. The ACB domain occupies 2–87; it reads SQAEFDKAAE…VEELKKKYGI (86 aa). Position 8 is an N6-acetyllysine; alternate (Lys8). N6-succinyllysine; alternate is present on Lys8. Lys14 is an an acyl-CoA binding site. The residue at position 17 (Lys17) is an N6-succinyllysine. Lys19 is modified (N6-acetyllysine). Tyr29 bears the Phosphotyrosine mark. An acyl-CoA contacts are provided by residues 29–33, Lys51, Lys55, and Tyr74; that span reads YSHYK. The residue at position 51 (Lys51) is an N6-acetyllysine. Lys55 carries the N6-acetyllysine; alternate modification. Lys55 bears the N6-succinyllysine; alternate mark. Lys55 carries the N6-(2-hydroxyisobutyryl)lysine; alternate modification. Lys55 carries the N6-malonyllysine; alternate modification. At Lys77 the chain carries N6-acetyllysine; alternate. Position 77 is an N6-succinyllysine; alternate (Lys77).

The protein belongs to the ACBP family. As to quaternary structure, monomer.

It localises to the endoplasmic reticulum. It is found in the golgi apparatus. Binds medium- and long-chain acyl-CoA esters with very high affinity and may function as an intracellular carrier of acyl-CoA esters. The polypeptide is Acyl-CoA-binding protein (DBI) (Chaetophractus villosus (South American armadillo)).